The following is a 296-amino-acid chain: UDP-N-acetylenolpyruvoylglucosamine reductase (296 aa).

In terms of domain architecture, FAD-binding PCMH-type spans 19 to 203 (KVGGFAEYFS…LETTQKNLKK (185 aa)). Arg166 is a catalytic residue. Ser217 serves as the catalytic Proton donor. Glu287 is a catalytic residue.

The protein belongs to the MurB family. It depends on FAD as a cofactor.

The protein resides in the cytoplasm. The catalysed reaction is UDP-N-acetyl-alpha-D-muramate + NADP(+) = UDP-N-acetyl-3-O-(1-carboxyvinyl)-alpha-D-glucosamine + NADPH + H(+). It participates in cell wall biogenesis; peptidoglycan biosynthesis. In terms of biological role, cell wall formation. In Prochlorococcus marinus subsp. pastoris (strain CCMP1986 / NIES-2087 / MED4), this protein is UDP-N-acetylenolpyruvoylglucosamine reductase.